The chain runs to 194 residues: 2,4-dinitrotoluene dioxygenase system, small oxygenase component (194 aa).

It belongs to the bacterial ring-hydroxylating dioxygenase beta subunit family. The 2,4-dinitrotoluene dioxygenase (DNTDO) multicomponent enzyme system is composed of an electron transfer component and a dioxygenase component (iron sulfur protein (ISP)). The electron transfer component is composed of a ferredoxin reductase (DntAa) and a ferredoxin (DntAb), and the dioxygenase component is formed of a large alpha subunit (DntAc) and a small beta subunit (DntAd).

Its function is as follows. Component of the 2,4-dinitrotoluene dioxygenase (DNTDO) multicomponent enzyme system which catalyzes the incorporation of both atoms of molecular oxygen into 2,4-dinitrotoluene (DNT) to form 4-methyl-5-nitrocatechol (MNC) and nitrite. The beta subunit seems to have a structural role in the holoenzyme. Also able to convert naphthalene to cis-(1R,2S)-dihydroxy-1,2-dihydronaphthalene. This Burkholderia sp. (strain RASC) protein is 2,4-dinitrotoluene dioxygenase system, small oxygenase component.